The sequence spans 468 residues: Phosphatidylinositol-binding clathrin assembly protein LAP (468 aa).

The region spanning 16-158 (RHSLAGQGLA…LSYRAMAFDF (143 aa)) is the ENTH domain. Residues 438–468 (NAGDGTAKYDGGAGSSPFDWGATDDDGGAAQ) are disordered. Residues 459-468 (ATDDDGGAAQ) show a composition bias toward acidic residues.

The protein belongs to the PICALM/SNAP91 family. Binds clathrin and phosphatidylinositol 4,5-bisphosphate. In embryos, expression is seen in central and peripheral nervous systems (brain and ventral nerve cord) and Garland cells. Coexpressed with clathrin at presynaptic boutons of neuromuscular junctions.

It localises to the membrane. The protein resides in the clathrin-coated pit. The protein localises to the golgi apparatus. It is found in the cytoplasmic vesicle. Its subcellular location is the clathrin-coated vesicle. Its function is as follows. Assembly protein recruiting clathrin and adaptor protein complex 2 (AP2) to cell membranes at sites of coated-pit formation and clathrin-vesicle assembly. May be required to determine the amount of membrane to be recycled, possibly by regulating the size of the clathrin cage. Involved in AP2-dependent clathrin-mediated endocytosis at the neuromuscular junction. This is Phosphatidylinositol-binding clathrin assembly protein LAP (lap) from Drosophila melanogaster (Fruit fly).